Consider the following 363-residue polypeptide: 3-dehydroquinate synthase (363 aa).

Residues 75–80 (DAEEGK), 109–113 (GAVTD), 133–134 (TS), K146, K155, and 173–176 (TLQT) each bind NAD(+). Residues E188, H251, and H267 each coordinate Zn(2+).

The protein belongs to the sugar phosphate cyclases superfamily. Dehydroquinate synthase family. The cofactor is Co(2+). Requires Zn(2+) as cofactor. NAD(+) serves as cofactor.

It localises to the cytoplasm. The enzyme catalyses 7-phospho-2-dehydro-3-deoxy-D-arabino-heptonate = 3-dehydroquinate + phosphate. Its pathway is metabolic intermediate biosynthesis; chorismate biosynthesis; chorismate from D-erythrose 4-phosphate and phosphoenolpyruvate: step 2/7. Catalyzes the conversion of 3-deoxy-D-arabino-heptulosonate 7-phosphate (DAHP) to dehydroquinate (DHQ). The polypeptide is 3-dehydroquinate synthase (Paenarthrobacter aurescens (strain TC1)).